The following is a 144-amino-acid chain: Group IID secretory phospholipase A2 (144 aa).

The first 19 residues, 1–19, serve as a signal peptide directing secretion; it reads MRLALLCGLLLAGITATQG. Intrachain disulfides connect cysteine 45–cysteine 137, cysteine 47–cysteine 63, cysteine 62–cysteine 117, cysteine 68–cysteine 144, cysteine 69–cysteine 110, cysteine 78–cysteine 103, and cysteine 96–cysteine 108. Residues histidine 46, glycine 48, and glycine 50 each coordinate Ca(2+). The active site involves histidine 66. Residue aspartate 67 participates in Ca(2+) binding. An N-linked (GlcNAc...) asparagine glycan is attached at asparagine 99. Aspartate 111 is an active-site residue.

Belongs to the phospholipase A2 family. Requires Ca(2+) as cofactor. As to expression, highly expressed in secondary lymphoid tissues, spleen and lymph nodes. Expressed at a lesser extent in thymus. Expressed in CD4-positive, IL2RA/CD25-positive, FOXP3-positive Tregs (at protein level). Expressed in myeloid cell subsets resident in spleen and lymph nodes, ITGAX/CD11C-positive dendritic cells and macrophages (at protein level). Enriched in CD4-positive, ITGAM/CD11B-positive dendritic cell subset. Expressed in pulmonary ITGAX/CD11C-positive dendritic cell subset (at protein level).

The protein localises to the secreted. The protein resides in the cell membrane. It is found in the cytoplasm. The catalysed reaction is a 1,2-diacyl-sn-glycero-3-phosphoethanolamine + H2O = a 1-acyl-sn-glycero-3-phosphoethanolamine + a fatty acid + H(+). The enzyme catalyses 1-hexadecanoyl-2-(9Z-octadecenoyl)-sn-glycero-3-phosphoethanolamine + H2O = 1-hexadecanoyl-sn-glycero-3-phosphoethanolamine + (9Z)-octadecenoate + H(+). It carries out the reaction 1-hexadecanoyl-2-(9Z,12Z-octadecadienoyl)-sn-glycero-3-phosphoethanolamine + H2O = 1-hexadecanoyl-sn-glycero-3-phosphoethanolamine + (9Z,12Z)-octadecadienoate + H(+). It catalyses the reaction 1,2-dihexadecanoyl-sn-glycero-3-phospho-(1'-sn-glycerol) + H2O = 1-hexadecanoyl-sn-glycero-3-phospho-(1'-sn-glycerol) + hexadecanoate + H(+). The catalysed reaction is 1-hexadecanoyl-2-(9Z-octadecenoyl)-sn-glycero-3-phospho-(1'-sn-glycerol) + H2O = 1-hexadecanoyl-sn-glycero-3-phospho-(1'-sn-glycerol) + (9Z)-octadecenoate + H(+). The enzyme catalyses a 1,2-diacyl-sn-glycero-3-phosphocholine + H2O = a 1-acyl-sn-glycero-3-phosphocholine + a fatty acid + H(+). It carries out the reaction 1,2-dihexadecanoyl-sn-glycero-3-phosphocholine + H2O = 1-hexadecanoyl-sn-glycero-3-phosphocholine + hexadecanoate + H(+). It catalyses the reaction 1-hexadecanoyl-2-(9Z-octadecenoyl)-sn-glycero-3-phosphocholine + H2O = 1-hexadecanoyl-sn-glycero-3-phosphocholine + (9Z)-octadecenoate + H(+). The catalysed reaction is 1-hexadecanoyl-2-(9Z,12Z-octadecadienoyl)-sn-glycero-3-phosphocholine + H2O = (9Z,12Z)-octadecadienoate + 1-hexadecanoyl-sn-glycero-3-phosphocholine + H(+). The enzyme catalyses 1-hexadecanoyl-2-(4Z,7Z,10Z,13Z,16Z,19Z-docosahexaenoyl)-sn-glycero-3-phosphocholine + H2O = (4Z,7Z,10Z,13Z,16Z,19Z)-docosahexaenoate + 1-hexadecanoyl-sn-glycero-3-phosphocholine + H(+). In terms of biological role, secretory calcium-dependent phospholipase A2 that primarily targets extracellular lipids, exerting anti-inflammatory and immunosuppressive functions. Hydrolyzes the ester bond of the fatty acyl group attached at sn-2 position of phospholipids (phospholipase A2 activity) with preference for phosphatidylethanolamines and phosphatidylglycerols over phosphatidylcholines. In draining lymph nodes, selectively hydrolyzes diacyl and alkenyl forms of phosphatidylethanolamines, releasing omega-3 polyunsaturated fatty acids (PUFAs) such as eicosapentaenoate and docosahexaenoate that are precursors of the anti-inflammatory lipid mediators, resolvins. During the resolution phase of acute inflammation drives docosahexaenoate-derived resolvin D1 synthesis, which suppresses dendritic cell activation and T-helper 1 immune response. May act in an autocrine and paracrine manner. Via a mechanism independent of its catalytic activity, promotes differentiation of regulatory T cells (Tregs) and participates in the maintenance of immune tolerance. May contribute to lipid remodeling of cellular membranes and generation of lipid mediators involved in pathogen clearance. Displays bactericidal activity against Gram-positive bacteria by directly hydrolyzing phospholipids of the bacterial membrane. This Mus musculus (Mouse) protein is Group IID secretory phospholipase A2 (Pla2g2d).